The chain runs to 328 residues: Malate dehydrogenase (328 aa).

Residue 11–17 (GAAGQIG) participates in NAD(+) binding. Positions 92 and 98 each coordinate substrate. NAD(+) is bound by residues asparagine 105, glutamine 112, and 129 to 131 (VGN). Residues asparagine 131 and arginine 162 each contribute to the substrate site. The active-site Proton acceptor is histidine 187.

Belongs to the LDH/MDH superfamily. MDH type 2 family.

It catalyses the reaction (S)-malate + NAD(+) = oxaloacetate + NADH + H(+). Its function is as follows. Catalyzes the reversible oxidation of malate to oxaloacetate. The chain is Malate dehydrogenase from Coxiella burnetii (strain CbuK_Q154) (Coxiella burnetii (strain Q154)).